The primary structure comprises 318 residues: Ferrochelatase (318 aa).

Fe cation contacts are provided by histidine 194 and glutamate 275.

Belongs to the ferrochelatase family.

The protein localises to the cytoplasm. It carries out the reaction heme b + 2 H(+) = protoporphyrin IX + Fe(2+). The protein operates within porphyrin-containing compound metabolism; protoheme biosynthesis; protoheme from protoporphyrin-IX: step 1/1. Catalyzes the ferrous insertion into protoporphyrin IX. The polypeptide is Ferrochelatase (Xanthomonas axonopodis pv. citri (strain 306)).